The following is a 159-amino-acid chain: Small ribosomal subunit protein uS4 (159 aa).

An S4 RNA-binding domain is found at 106 to 158 (RRLQTIVYRMGLAKSIYHARQLIVHGHIAVAGRRVSSPGFLVPRELEDKISLI).

This sequence belongs to the universal ribosomal protein uS4 family. In terms of assembly, part of the 30S ribosomal subunit. Contacts protein S5. The interaction surface between S4 and S5 is involved in control of translational fidelity.

Its function is as follows. One of the primary rRNA binding proteins, it binds directly to 16S rRNA where it nucleates assembly of the body of the 30S subunit. Functionally, with S5 and S12 plays an important role in translational accuracy. This Pyrobaculum neutrophilum (strain DSM 2338 / JCM 9278 / NBRC 100436 / V24Sta) (Thermoproteus neutrophilus) protein is Small ribosomal subunit protein uS4.